The primary structure comprises 739 residues: Eukaryotic translation initiation factor 3 subunit B (739 aa).

The interval 1–98 is sufficient for interaction with HCR1 and TIF32; that stretch reads MSINEEDYLQ…LFIQFKSTES (98 aa). Residues 1 to 224 form a sufficient for interaction with PIC8 region; that stretch reads MSINEEDYLQ…GIQSWGGANF (224 aa). Residues 37–124 enclose the RRM domain; it reads NYIIVDGAPI…HRLLVNKLSD (88 aa). WD repeat units follow at residues 190 to 229, 231 to 293, 301 to 339, 343 to 385, 453 to 502, 537 to 579, and 592 to 630; these read PRKG…SIKR, FHQQ…RTFA, QKEM…QLLD, VKVD…QTAR, ELKD…KGGV, IENK…ETNK, and DKFS…YEFT.

The protein belongs to the eIF-3 subunit B family. Component of the eukaryotic translation initiation factor 3 (eIF-3) complex.

The protein localises to the cytoplasm. In terms of biological role, RNA-binding component of the eukaryotic translation initiation factor 3 (eIF-3) complex, which is involved in protein synthesis of a specialized repertoire of mRNAs and, together with other initiation factors, stimulates binding of mRNA and methionyl-tRNAi to the 40S ribosome. The eIF-3 complex specifically targets and initiates translation of a subset of mRNAs involved in cell proliferation. The protein is Eukaryotic translation initiation factor 3 subunit B of Candida albicans (strain SC5314 / ATCC MYA-2876) (Yeast).